We begin with the raw amino-acid sequence, 97 residues long: Co-chaperonin GroES (97 aa).

This sequence belongs to the GroES chaperonin family. In terms of assembly, heptamer of 7 subunits arranged in a ring. Interacts with the chaperonin GroEL.

It localises to the cytoplasm. Functionally, together with the chaperonin GroEL, plays an essential role in assisting protein folding. The GroEL-GroES system forms a nano-cage that allows encapsulation of the non-native substrate proteins and provides a physical environment optimized to promote and accelerate protein folding. GroES binds to the apical surface of the GroEL ring, thereby capping the opening of the GroEL channel. This is Co-chaperonin GroES from Burkholderia vietnamiensis.